The chain runs to 248 residues: Granulin (248 aa).

Belongs to the polyhedrin family.

In terms of biological role, component of the virus occlusion bodies, which are large proteinaceous structures, that protect the virus from the outside environment for extended periods until they are ingested by insect larvae. The chain is Granulin from Zygaenidae (burnets).